The chain runs to 188 residues: ATP synthase subunit delta (188 aa).

It belongs to the ATPase delta chain family. F-type ATPases have 2 components, F(1) - the catalytic core - and F(0) - the membrane proton channel. F(1) has five subunits: alpha(3), beta(3), gamma(1), delta(1), epsilon(1). F(0) has three main subunits: a(1), b(2) and c(10-14). The alpha and beta chains form an alternating ring which encloses part of the gamma chain. F(1) is attached to F(0) by a central stalk formed by the gamma and epsilon chains, while a peripheral stalk is formed by the delta and b chains.

The protein localises to the cell membrane. F(1)F(0) ATP synthase produces ATP from ADP in the presence of a proton or sodium gradient. F-type ATPases consist of two structural domains, F(1) containing the extramembraneous catalytic core and F(0) containing the membrane proton channel, linked together by a central stalk and a peripheral stalk. During catalysis, ATP synthesis in the catalytic domain of F(1) is coupled via a rotary mechanism of the central stalk subunits to proton translocation. Functionally, this protein is part of the stalk that links CF(0) to CF(1). It either transmits conformational changes from CF(0) to CF(1) or is implicated in proton conduction. The sequence is that of ATP synthase subunit delta from Malacoplasma penetrans (strain HF-2) (Mycoplasma penetrans).